Here is a 245-residue protein sequence, read N- to C-terminus: Small ribosomal subunit protein uS2 (245 aa).

The protein belongs to the universal ribosomal protein uS2 family.

This is Small ribosomal subunit protein uS2 from Dehalococcoides mccartyi (strain CBDB1).